The primary structure comprises 153 residues: Alpha-amylase type B isozyme (153 aa).

Residues Lys19, Gly25–Trp27, His38, Gln44, Lys123, and Trp150 contribute to the substrate site.

The protein belongs to the glycosyl hydrolase 13 family. As to quaternary structure, monomer. Requires Ca(2+) as cofactor.

It carries out the reaction Endohydrolysis of (1-&gt;4)-alpha-D-glucosidic linkages in polysaccharides containing three or more (1-&gt;4)-alpha-linked D-glucose units.. The protein is Alpha-amylase type B isozyme (AMY1.4) of Hordeum vulgare (Barley).